We begin with the raw amino-acid sequence, 570 residues long: Small ribosomal subunit protein uS2c (570 aa).

The N-terminal extension stretch occupies residues 1–306 (MLNKKPPYLI…IKLNPLSTPQ (306 aa)). TRAM domains are found at residues 28-89 (KLIP…KLIK) and 104-169 (ALTP…VATV).

Belongs to the universal ribosomal protein uS2 family.

It is found in the plastid. Its subcellular location is the chloroplast. The protein is Small ribosomal subunit protein uS2c (rps2-1) of Chlamydomonas reinhardtii (Chlamydomonas smithii).